The primary structure comprises 136 residues: Large ribosomal subunit protein uL16 (136 aa).

Belongs to the universal ribosomal protein uL16 family. As to quaternary structure, part of the 50S ribosomal subunit.

Its function is as follows. Binds 23S rRNA and is also seen to make contacts with the A and possibly P site tRNAs. The protein is Large ribosomal subunit protein uL16 of Shigella flexneri.